A 355-amino-acid chain; its full sequence is Arginine kinase (355 aa).

In terms of domain architecture, Phosphagen kinase N-terminal spans 8 to 90; it reads KLQAGFKKLE…FDPIIEDYHV (83 aa). An L-arginine-binding site is contributed by 63 to 67; the sequence is GVGIY. Residues 118-355 enclose the Phosphagen kinase C-terminal domain; the sequence is YVISTRVRCG…LQLIKMEKEM (238 aa). ATP-binding positions include 121 to 125 and His-184; that span reads STRVR. Glu-224 provides a ligand contact to L-arginine. Residue Arg-228 participates in ATP binding. Position 270 (Cys-270) interacts with L-arginine. ATP-binding positions include 279–283 and 308–313; these read RASVH and RGTRGE. Glu-313 is an L-arginine binding site.

Belongs to the ATP:guanido phosphotransferase family. In terms of assembly, monomer.

It carries out the reaction L-arginine + ATP = N(omega)-phospho-L-arginine + ADP + H(+). The polypeptide is Arginine kinase (Penaeus japonicus (Kuruma prawn)).